A 103-amino-acid polypeptide reads, in one-letter code: MVKVIDVGRVVVKVLGREAGRKAVVVDIVDENYVVITGPKSLSGVRRRRVNINHIEPTDKKIEIKKGASDEEVLKALEAAGLVEYMKERVKPKLFEITPADVK.

It belongs to the eukaryotic ribosomal protein eL14 family.

In Pyrobaculum calidifontis (strain DSM 21063 / JCM 11548 / VA1), this protein is Large ribosomal subunit protein eL14.